The chain runs to 83 residues: MTHKREIQGVVVKKSGDKTASVLVTRSVLHPKYHKTVKRFKKYLIHDEKNELNVGDSVIAIECRPLSKTKSFRLKTIVATGVK.

Belongs to the universal ribosomal protein uS17 family. As to quaternary structure, part of the 30S ribosomal subunit.

In terms of biological role, one of the primary rRNA binding proteins, it binds specifically to the 5'-end of 16S ribosomal RNA. This Aliarcobacter butzleri (strain RM4018) (Arcobacter butzleri) protein is Small ribosomal subunit protein uS17.